Here is a 215-residue protein sequence, read N- to C-terminus: Large ribosomal subunit protein uL4 (215 aa).

Residues alanine 43–glutamine 100 are disordered.

It belongs to the universal ribosomal protein uL4 family. As to quaternary structure, part of the 50S ribosomal subunit.

Functionally, one of the primary rRNA binding proteins, this protein initially binds near the 5'-end of the 23S rRNA. It is important during the early stages of 50S assembly. It makes multiple contacts with different domains of the 23S rRNA in the assembled 50S subunit and ribosome. Forms part of the polypeptide exit tunnel. The chain is Large ribosomal subunit protein uL4 from Mycolicibacterium smegmatis (Mycobacterium smegmatis).